The following is a 78-amino-acid chain: Exodeoxyribonuclease 7 small subunit (78 aa).

It belongs to the XseB family. As to quaternary structure, heterooligomer composed of large and small subunits.

Its subcellular location is the cytoplasm. The catalysed reaction is Exonucleolytic cleavage in either 5'- to 3'- or 3'- to 5'-direction to yield nucleoside 5'-phosphates.. In terms of biological role, bidirectionally degrades single-stranded DNA into large acid-insoluble oligonucleotides, which are then degraded further into small acid-soluble oligonucleotides. This is Exodeoxyribonuclease 7 small subunit from Pediococcus pentosaceus (strain ATCC 25745 / CCUG 21536 / LMG 10740 / 183-1w).